A 91-amino-acid polypeptide reads, in one-letter code: Large ribosomal subunit protein eL37 (91 aa).

Residues C19, C22, C34, and C37 each coordinate Zn(2+). The C4-type zinc-finger motif lies at 19-37 (CKRCGKSSFHIQKKRCASC).

The protein belongs to the eukaryotic ribosomal protein eL37 family. It depends on Zn(2+) as a cofactor.

In terms of biological role, binds to the 23S rRNA. This is Large ribosomal subunit protein eL37 from Caenorhabditis elegans.